The primary structure comprises 23 residues: Large ribosomal subunit protein uL10 (23 aa).

This sequence belongs to the universal ribosomal protein uL10 family. Part of the ribosomal stalk of the 50S ribosomal subunit. The N-terminus interacts with L11 and the large rRNA to form the base of the stalk. The C-terminus forms an elongated spine to which L12 dimers bind in a sequential fashion forming a multimeric L10(L12)X complex.

In terms of biological role, forms part of the ribosomal stalk, playing a central role in the interaction of the ribosome with GTP-bound translation factors. This Klebsiella pneumoniae protein is Large ribosomal subunit protein uL10 (rplJ).